A 323-amino-acid polypeptide reads, in one-letter code: Iron-sulfur cluster transfer protein NUBPL (323 aa).

Residue 65-72 participates in ATP binding; the sequence is AKGGVGKS.

This sequence belongs to the Mrp/NBP35 ATP-binding proteins family. The cofactor is [4Fe-4S] cluster.

The protein localises to the mitochondrion. Its function is as follows. Iron-sulfur cluster transfer protein involved in the assembly of the mitochondrial membrane respiratory chain NADH dehydrogenase (Complex I). May deliver one or more Fe-S clusters to complex I subunits. The chain is Iron-sulfur cluster transfer protein NUBPL (nubpl) from Dictyostelium discoideum (Social amoeba).